Here is a 323-residue protein sequence, read N- to C-terminus: Elongation factor P--(R)-beta-lysine ligase (323 aa).

74-76 (SPE) lines the substrate pocket. ATP contacts are provided by residues 98 to 100 (RNE) and Asn-107. A substrate-binding site is contributed by Tyr-116. ATP is bound at residue 242–243 (EL). Glu-249 serves as a coordination point for substrate. Gly-298 lines the ATP pocket.

Belongs to the class-II aminoacyl-tRNA synthetase family. EpmA subfamily. As to quaternary structure, homodimer.

The catalysed reaction is D-beta-lysine + L-lysyl-[protein] + ATP = N(6)-((3R)-3,6-diaminohexanoyl)-L-lysyl-[protein] + AMP + diphosphate + H(+). With EpmB is involved in the beta-lysylation step of the post-translational modification of translation elongation factor P (EF-P). Catalyzes the ATP-dependent activation of (R)-beta-lysine produced by EpmB, forming a lysyl-adenylate, from which the beta-lysyl moiety is then transferred to the epsilon-amino group of a conserved specific lysine residue in EF-P. The polypeptide is Elongation factor P--(R)-beta-lysine ligase (Vibrio campbellii (strain ATCC BAA-1116)).